The primary structure comprises 506 residues: Lysine--tRNA ligase (506 aa).

Mg(2+) is bound by residues Glu416 and Glu423.

This sequence belongs to the class-II aminoacyl-tRNA synthetase family. As to quaternary structure, homodimer. Mg(2+) serves as cofactor.

It localises to the cytoplasm. The enzyme catalyses tRNA(Lys) + L-lysine + ATP = L-lysyl-tRNA(Lys) + AMP + diphosphate. In Sodalis glossinidius (strain morsitans), this protein is Lysine--tRNA ligase.